A 316-amino-acid polypeptide reads, in one-letter code: Ribosomal RNA small subunit methyltransferase H (316 aa).

S-adenosyl-L-methionine-binding positions include 35–37 (AGH), D55, F84, D105, and Q112.

Belongs to the methyltransferase superfamily. RsmH family.

It is found in the cytoplasm. The enzyme catalyses cytidine(1402) in 16S rRNA + S-adenosyl-L-methionine = N(4)-methylcytidine(1402) in 16S rRNA + S-adenosyl-L-homocysteine + H(+). Functionally, specifically methylates the N4 position of cytidine in position 1402 (C1402) of 16S rRNA. In Streptococcus pneumoniae (strain 70585), this protein is Ribosomal RNA small subunit methyltransferase H.